Consider the following 316-residue polypeptide: Deoxyribonuclease-1-like 1 (316 aa).

Residues 1-28 form the signal peptide; the sequence is MHSSGGFQKAIHGHALLLLLLLASGAET. Catalysis depends on residues E107 and H158. Residues C197 and C234 are joined by a disulfide bond. N-linked (GlcNAc...) asparagine glycosylation is present at N271.

This sequence belongs to the DNase I family.

It localises to the endoplasmic reticulum. The polypeptide is Deoxyribonuclease-1-like 1 (DNASE1L1) (Bos taurus (Bovine)).